The chain runs to 138 residues: D-ribose pyranase (138 aa).

His-20 (proton donor) is an active-site residue. Substrate is bound by residues Asp-28, His-105, and 127 to 129 (YAN).

The protein belongs to the RbsD / FucU family. RbsD subfamily. As to quaternary structure, homodecamer.

Its subcellular location is the cytoplasm. It carries out the reaction beta-D-ribopyranose = beta-D-ribofuranose. Its pathway is carbohydrate metabolism; D-ribose degradation; D-ribose 5-phosphate from beta-D-ribopyranose: step 1/2. Catalyzes the interconversion of beta-pyran and beta-furan forms of D-ribose. This Psychromonas ingrahamii (strain DSM 17664 / CCUG 51855 / 37) protein is D-ribose pyranase.